Reading from the N-terminus, the 473-residue chain is Proline--tRNA ligase (473 aa).

It belongs to the class-II aminoacyl-tRNA synthetase family. ProS type 3 subfamily. As to quaternary structure, homodimer.

Its subcellular location is the cytoplasm. The catalysed reaction is tRNA(Pro) + L-proline + ATP = L-prolyl-tRNA(Pro) + AMP + diphosphate. Its function is as follows. Catalyzes the attachment of proline to tRNA(Pro) in a two-step reaction: proline is first activated by ATP to form Pro-AMP and then transferred to the acceptor end of tRNA(Pro). In Mesoplasma florum (strain ATCC 33453 / NBRC 100688 / NCTC 11704 / L1) (Acholeplasma florum), this protein is Proline--tRNA ligase.